The following is a 428-amino-acid chain: Cyclic AMP-responsive element-binding protein 3-like protein 4 (428 aa).

A required for transcriptional activation region spans residues 1-68 (MLLGSLFEQT…EFLQMMINPN (68 aa)). Residues 1–294 (MLLGSLFEQT…QTSNKAAQTS (294 aa)) are Cytoplasmic-facing. The tract at residues 71–111 (YSTGPAAAESPESDSGFSDDPRPDTPPQSETSPPLPQPTPV) is disordered. Residues 216–279 (ILKKVRRKIR…ISLITQLRKL (64 aa)) form the bZIP domain. The interval 218–247 (KKVRRKIRNKQSAQDSRRRKKEYIDGLESR) is basic motif. A leucine-zipper region spans residues 258–279 (LHKKVVELEKHNISLITQLRKL). A helical; Signal-anchor for type II membrane protein transmembrane segment spans residues 295-315 (TCVLILLFSLALLVFPSYSPF). Residues 316 to 428 (RSRPSASQED…LSKTARADEM (113 aa)) lie on the Lumenal side of the membrane. The segment at 339–428 (NKGGFSEVAD…LSKTARADEM (90 aa)) is disordered. The segment covering 354–368 (TLHRAQQREEGDPGR) has biased composition (basic and acidic residues). N-linked (GlcNAc...) asparagine glycosylation is present at Asn418.

Belongs to the bZIP family. ATF subfamily. Binds DNA as a dimer. Post-translationally, controlled by regulated intramembrane proteolysis (RIP). A fragment containing the cytoplasmic transcription factor domain is released by proteolysis. The cleavage seems to be performed sequentially by site-1 and site-2 proteases (PS1 and PS2).

It is found in the endoplasmic reticulum membrane. The protein resides in the nucleus. Functionally, transcriptional activator. In Xenopus tropicalis (Western clawed frog), this protein is Cyclic AMP-responsive element-binding protein 3-like protein 4 (creb3l4).